The sequence spans 230 residues: Transmembrane 4 L6 family member 20 (230 aa).

Over 1-11 (MTCCEGWTSCN) the chain is Lumenal. Residues 12–32 (GFSLLVLLLLGVTLNAIPLIL) form a helical membrane-spanning segment. Residues 33-44 (NFVDEDQFFENP) lie on the Cytoplasmic side of the membrane. A helical membrane pass occupies residues 45–65 (ISCFEWWFPGIIGAGVMAIPA). Over 66-83 (TTMSLAARKRACCNNKTG) the chain is Lumenal. A helical transmembrane segment spans residues 84–104 (MFLSSLLNAITVIGAAYCLLV). At 105 to 185 (SIQALAEGPL…HFNSIENQHR (81 aa)) the chain is on the cytoplasmic side. A helical transmembrane segment spans residues 186–206 (IIHFSVFLGLLLVGILEILFG). Topologically, residues 207–230 (LSQIIIGFFGCLCGGVSNGRSQIV) are lumenal.

Belongs to the L6 tetraspanin family. Post-translationally, glycosylated at Asn-132 in presence of ceramide which inverts the orientation of TM4SF20 in membranes exposing these residues to the endoplasmic reticulum lumen. Cleaved by signal peptidase at Ser-14 but the peptide does not act as a signal peptide. Cleavage is inhibited by ceramide which inverts the orientation of TM4SF20 in membranes exposing the N-terminus to the cytosol and not to the endoplasmic reticulum lumen.

It is found in the membrane. It localises to the endoplasmic reticulum membrane. Polytopic transmembrane protein. Inhibits regulated intramembrane proteolysis (RIP) of CREB3L1, inhibiting its activation and the induction of collagen synthesis. In response to ceramide, which alters TM4SF20 membrane topology, stimulates RIP activation of CREB3L1. Ceramide reverses the direction through which transmembrane helices are translocated into the endoplasmic reticulum membrane during translation of TM4SF20, this mechanism is called 'regulated alternative translocation' (RAT) and regulates the function of the transmembrane protein. The polypeptide is Transmembrane 4 L6 family member 20 (TM4SF20) (Bos taurus (Bovine)).